The following is a 328-amino-acid chain: MKAPVRVAVTGAAGQIGYALLFRIASGEMLGKDQPVILQLLELPIEKAQAALKGVMMELEDCAFPLLAGMVGTDDAEVAFKDVDIALLVGSRPRGPGMERKDLLLANAEIFTAQGAALNKVAKRDVKVLVVGNPANTNAYIAMKSAPDLDPKNFTAMLRLDHNRALSQLSAKLGKPVAGIEKLAVWGNHSPTMYPDYRFATADGASVGDAINDQEWNASTFIPTVGKRGAAIIEARGLSSAASAANAAIDHIRDWVLGTNGKWVTMGVPSDGSYGIPEGVMFGFPVTTENGKYTIVKDLPIDDFSQKYIDKTLAELEEERSGVAHLLG.

Residue 11–17 (GAAGQIG) coordinates NAD(+). Residues Arg-94 and Arg-100 each contribute to the substrate site. NAD(+)-binding positions include Asn-107, Gln-114, and 131 to 133 (VGN). 2 residues coordinate substrate: Asn-133 and Arg-164. Residue His-189 is the Proton acceptor of the active site.

It belongs to the LDH/MDH superfamily. MDH type 2 family.

It carries out the reaction (S)-malate + NAD(+) = oxaloacetate + NADH + H(+). Catalyzes the reversible oxidation of malate to oxaloacetate. In Xanthomonas euvesicatoria pv. vesicatoria (strain 85-10) (Xanthomonas campestris pv. vesicatoria), this protein is Malate dehydrogenase.